The chain runs to 248 residues: Triosephosphate isomerase (248 aa).

A substrate-binding site is contributed by 9–11 (NWK). Catalysis depends on H94, which acts as the Electrophile. E166 acts as the Proton acceptor in catalysis. Substrate is bound by residues G172, S212, and 233–234 (GG).

The protein belongs to the triosephosphate isomerase family. In terms of assembly, homodimer.

Its subcellular location is the cytoplasm. The catalysed reaction is D-glyceraldehyde 3-phosphate = dihydroxyacetone phosphate. It participates in carbohydrate biosynthesis; gluconeogenesis. The protein operates within carbohydrate degradation; glycolysis; D-glyceraldehyde 3-phosphate from glycerone phosphate: step 1/1. Functionally, involved in the gluconeogenesis. Catalyzes stereospecifically the conversion of dihydroxyacetone phosphate (DHAP) to D-glyceraldehyde-3-phosphate (G3P). The sequence is that of Triosephosphate isomerase from Clostridium botulinum (strain Loch Maree / Type A3).